The chain runs to 1028 residues: Beta-galactosidase (1028 aa).

Substrate contacts are provided by N104 and D203. Position 203 (D203) interacts with Na(+). Mg(2+) is bound by residues E418, H420, and E463. Residues E463 and 539-542 (EYAH) contribute to the substrate site. Catalysis depends on E463, which acts as the Proton donor. E539 functions as the Nucleophile in the catalytic mechanism. Residue N599 participates in Mg(2+) binding. Na(+)-binding residues include F603 and N606. Residues N606 and W1004 each coordinate substrate.

This sequence belongs to the glycosyl hydrolase 2 family. As to quaternary structure, homotetramer. Mg(2+) serves as cofactor. The cofactor is Na(+).

The catalysed reaction is Hydrolysis of terminal non-reducing beta-D-galactose residues in beta-D-galactosides.. This chain is Beta-galactosidase, found in Enterobacter sp. (strain 638).